The primary structure comprises 531 residues: Putative heme-binding protein HQ_1094A (531 aa).

Position 177 (H177) interacts with heme. The disordered stretch occupies residues A269–E340. The span at G271–S281 shows a compositional bias: basic and acidic residues. Over residues G284–A306 the composition is skewed to gly residues. The span at G308–S317 shows a compositional bias: basic and acidic residues. The span at R318–D338 shows a compositional bias: low complexity. One can recognise an ABM domain in the interval G441 to F529.

The protein in the N-terminal section; belongs to the ChdC family.

This Haloquadratum walsbyi (strain DSM 16790 / HBSQ001) protein is Putative heme-binding protein HQ_1094A.